The following is a 148-amino-acid chain: Hut operon positive regulatory protein (148 aa).

It belongs to the HutP family. In terms of assembly, homohexamer.

In terms of biological role, antiterminator that binds to cis-acting regulatory sequences on the mRNA in the presence of histidine, thereby suppressing transcription termination and activating the hut operon for histidine utilization. The protein is Hut operon positive regulatory protein of Bacillus velezensis (strain DSM 23117 / BGSC 10A6 / LMG 26770 / FZB42) (Bacillus amyloliquefaciens subsp. plantarum).